Here is a 213-residue protein sequence, read N- to C-terminus: Nucleoside triphosphate pyrophosphatase (213 aa).

Residue Asp-79 is the Proton acceptor of the active site.

This sequence belongs to the Maf family. A divalent metal cation is required as a cofactor.

The protein localises to the cytoplasm. It carries out the reaction a ribonucleoside 5'-triphosphate + H2O = a ribonucleoside 5'-phosphate + diphosphate + H(+). It catalyses the reaction a 2'-deoxyribonucleoside 5'-triphosphate + H2O = a 2'-deoxyribonucleoside 5'-phosphate + diphosphate + H(+). Functionally, nucleoside triphosphate pyrophosphatase. May have a dual role in cell division arrest and in preventing the incorporation of modified nucleotides into cellular nucleic acids. This is Nucleoside triphosphate pyrophosphatase from Rhodococcus erythropolis (strain PR4 / NBRC 100887).